The chain runs to 781 residues: Cadherin-24 (781 aa).

An N-terminal signal peptide occupies residues 1–22 (MWGLVRLLLAWLGGWGCMGRLA). A propeptide spanning residues 23 to 44 (APVPAWAGSRGHSGPTLLRTRR) is cleaved from the precursor. Residues 45-603 (SWVWNQFFVI…LSPTGLSTGA (559 aa)) lie on the Extracellular side of the membrane. 5 consecutive Cadherin domains span residues 46 to 150 (WVWN…PPVF), 151 to 259 (PLGP…PPKF), 260 to 374 (PQSL…PPAF), 375 to 479 (TQAT…APQL), and 479 to 592 (LAEP…WPEA). N-linked (GlcNAc...) asparagine glycosylation is found at N446, N510, and N525. Residues 604-624 (LLAIVTCMGTLLALVVLFVAL) form a helical membrane-spanning segment. Residues 625–781 (RRQKQEALMV…LYGAKEPPAP (157 aa)) lie on the Cytoplasmic side of the membrane. 2 disordered regions span residues 665–700 (LQNPDGAAPPAAGPPVRRDVLPRTRAPRQPRPPGPA) and 731–762 (EGRGSSCGSLSSLGSGSEAGGVPGPAEPLDDW). Positions 733 to 746 (RGSSCGSLSSLGSG) are enriched in low complexity.

Associates with alpha-, beta- and delta-catenins.

It localises to the cell membrane. Cadherins are calcium-dependent cell adhesion proteins. They preferentially interact with themselves in a homophilic manner in connecting cells; cadherins may thus contribute to the sorting of heterogeneous cell types. Cadherin-24 mediate strong cell-cell adhesion. The sequence is that of Cadherin-24 (Cdh24) from Mus musculus (Mouse).